The following is a 315-amino-acid chain: MLKVNADFLTKDQVIYDLVIVGAGPAGIASAIYGKRANLNLAIIEGNTPGGKIVKTNIVENYPGFKTITGPELGLEMYNHLLAFEPVVFYNNLIKIDHLNDTFILYLDNKTTVFSKTVIYATGMEERKLGIEKEDYFYGKGISYCAICDAALYKGKTVGVVGGGNSAIQEAIYLSSIAKTVHLIHRREVFRSDALLVEKLKKISNVVFHLNATVKQLIGQEKLQTVKLASTVDKSESEIAIDCLFPYIGFESNNKPVLDLKLNLDQNGFILGDENMQTNIKGFYVAGDCRSKSFRQIATAISDGVTAVLKVRDDI.

Residue 45-52 (EGNTPGGK) coordinates FAD. Cys-145 and Cys-148 are disulfide-bonded. 288–297 (DCRSKSFRQI) is an FAD binding site.

This sequence belongs to the class-II pyridine nucleotide-disulfide oxidoreductase family. As to quaternary structure, homodimer. FAD serves as cofactor.

The protein localises to the cytoplasm. It catalyses the reaction [thioredoxin]-dithiol + NADP(+) = [thioredoxin]-disulfide + NADPH + H(+). The protein is Thioredoxin reductase (trxB) of Mycoplasma genitalium (strain ATCC 33530 / DSM 19775 / NCTC 10195 / G37) (Mycoplasmoides genitalium).